The primary structure comprises 556 residues: 2-succinyl-5-enolpyruvyl-6-hydroxy-3-cyclohexene-1-carboxylate synthase (556 aa).

It belongs to the TPP enzyme family. MenD subfamily. As to quaternary structure, homodimer. It depends on Mg(2+) as a cofactor. Mn(2+) serves as cofactor. The cofactor is thiamine diphosphate.

The catalysed reaction is isochorismate + 2-oxoglutarate + H(+) = 5-enolpyruvoyl-6-hydroxy-2-succinyl-cyclohex-3-ene-1-carboxylate + CO2. It functions in the pathway quinol/quinone metabolism; 1,4-dihydroxy-2-naphthoate biosynthesis; 1,4-dihydroxy-2-naphthoate from chorismate: step 2/7. The protein operates within quinol/quinone metabolism; menaquinone biosynthesis. Its function is as follows. Catalyzes the thiamine diphosphate-dependent decarboxylation of 2-oxoglutarate and the subsequent addition of the resulting succinic semialdehyde-thiamine pyrophosphate anion to isochorismate to yield 2-succinyl-5-enolpyruvyl-6-hydroxy-3-cyclohexene-1-carboxylate (SEPHCHC). The sequence is that of 2-succinyl-5-enolpyruvyl-6-hydroxy-3-cyclohexene-1-carboxylate synthase from Enterobacter sp. (strain 638).